We begin with the raw amino-acid sequence, 625 residues long: Cytochrome c oxidase subunit 1 (625 aa).

The chain crosses the membrane as a helical span at residues 23–43 (IAIMYLIAGTLFFVKAGVMAL). H69 contributes to the Fe(II)-heme a binding site. The next 6 helical transmembrane spans lie at 72–92 (IMLFLAATPLLFAFMNYVIPL), 99–119 (VAFPFVNALGFWIFFFGGLLL), 151–171 (FYVLGLQVSGIGTLISAINFL), 195–215 (FISSTLILFAFTPLAAGLALL), 240–260 (IFWIFGHPEVYILVLPAFGII), and 272–292 (LFGYTAMVFATMIIAFLGFMV). Cu cation contacts are provided by H246 and Y250. A cross-link (1'-histidyl-3'-tyrosine (His-Tyr)) is located at residues 246–250 (HPEVY). 2 residues coordinate Cu cation: H295 and H296. Helical transmembrane passes span 309-329 (IFAVATMTIAVPTGIKIFNWL) and 343-363 (MLFASSFVPTFVLGGVTGVML). H381 lines the heme a3 pocket. 5 helical membrane-spanning segments follow: residues 382-402 (FHYIIVGGIVLSLFAGLFYWY), 417-437 (LFFWVFYIGFHLTFFVQHLLG), 460-480 (ISTIGTFFMSAGVILLVINVI), 551-571 (SILPFIMSIGLFFAGFGLIML), and 577-597 (IINPWIVAIGGLALTFGCMFV). A Fe(II)-heme a-binding site is contributed by H383.

It belongs to the heme-copper respiratory oxidase family.

The protein resides in the cell membrane. It catalyses the reaction 4 Fe(II)-[cytochrome c] + O2 + 8 H(+)(in) = 4 Fe(III)-[cytochrome c] + 2 H2O + 4 H(+)(out). Its pathway is energy metabolism; oxidative phosphorylation. In terms of biological role, cytochrome c oxidase is the component of the respiratory chain that catalyzes the reduction of oxygen to water. Subunits 1-3 form the functional core of the enzyme complex. CO I is the catalytic subunit of the enzyme. Electrons originating in cytochrome c are transferred via the copper A center of subunit 2 and heme A of subunit 1 to the bimetallic center formed by heme A3 and copper B. In Alkalihalophilus pseudofirmus (strain ATCC BAA-2126 / JCM 17055 / OF4) (Bacillus pseudofirmus), this protein is Cytochrome c oxidase subunit 1 (ctaD).